The chain runs to 332 residues: Ribosomal RNA small subunit methyltransferase C (332 aa).

This sequence belongs to the methyltransferase superfamily. RsmC family. In terms of assembly, monomer.

It localises to the cytoplasm. It carries out the reaction guanosine(1207) in 16S rRNA + S-adenosyl-L-methionine = N(2)-methylguanosine(1207) in 16S rRNA + S-adenosyl-L-homocysteine + H(+). Specifically methylates the guanine in position 1207 of 16S rRNA in the 30S particle. This Stutzerimonas stutzeri (strain A1501) (Pseudomonas stutzeri) protein is Ribosomal RNA small subunit methyltransferase C.